We begin with the raw amino-acid sequence, 1179 residues long: MAGKVIQSGRHRQRRTYSRINEVLGLPNLIEIQQKSYQWFLDEGLREMFQDISPIQDFTGNLVLEFIDYSLGEPKYDVDESKERDVTYAAPLRVKVRLLNKETGEVKEQEVFMGDFPLMTETGTFIINGAERVIVSQLVRSPSVYYNTKVDKNGKQTFTATVIPNRGAWLELETDAKDVIYVRIDRTRKIPVTVLLRALGFGSDIEILNLLGEDEYIKNTLEKDNTDSTEKALIEIYERLRPGEPPTVENAKSLLISRFFDPKRYDLASVGRYKMNKKLHLKNRLYNQRLAETLIDTTTGEIFAEAGQMIDRRVLERIVPALEGSIGFIDVRTHGGVLEDEAIHLQSINIFSPIEDGKIIKVIGNGNVDKSFKHITPADIVSAINYFMNLLHSVGSTDDIDHLGNRRLRSVGELLQNQFRIGLSRMERVVRERMSIQDQNQITPQALINIRPVIASLKEFFGSSQLSQFMDQTNPLAELTHKRRLSALGPGGLTRERAGFEVRDVHHSHYGRMCPIETPEGPNIGLINSLSSFARINDYGFIETPRRKVDPETGFVLTDISYLTADEEDVFNVAQANQPLDEDGRFVNDMVICRRKGEILSVPRDKVDFMDVSPKQVVSVATALIPFLENDDANRALMGSNMQRQAVPLLIPQAPFVGTGMEHKAAQDSGVAIVAKHPGQVERVTAREIWIRRYQEIDGRKVAGDLDKYKMHKFIRSNQGTCINQRPIVSTGDWIEKGDIVGDGPSTEKGELALGRNVIVAFMTWEGYNYEDAILLSEKLVKDDVYTSIHIEEYESEARDTKLGPEEITRDIPNVGEDALKNLDERGIIRVGAEIQDGDILVGKVTPKGVTELTAEERLLHAIFGEKAREVRDTSLRVPHGGSGIIVDVKVFTRENGDELPPGVNQLVRVYIAQKRKISVGDKMAGRHGNKGVIARIMAEEDMPFLPDGSPVEIVLNPLGVPSRMNIGQVLETHLGMAAKLLGIHVATPVFDGARQAEVFETLAEAGLDRDGKTILFDGRTGEPFDRRVTVGCVYMLKLAHLVDDKIHARSTGPYSLVTQQPLGGKAQFGGQRFGEMEVWALEAYGAAYTLQEILTVKSDDVVGRVKTYEAIVKGENVPEPGVPESFKVLIKELQSLGMDVKILSGDEQEIEMREMEDEDEGNGEKLNLVLEGGSLNEE.

Residues 1153-1162 are compositionally biased toward acidic residues; the sequence is MREMEDEDEG. Residues 1153-1179 form a disordered region; the sequence is MREMEDEDEGNGEKLNLVLEGGSLNEE.

The protein belongs to the RNA polymerase beta chain family. In terms of assembly, the RNAP catalytic core consists of 2 alpha, 1 beta, 1 beta' and 1 omega subunit. When a sigma factor is associated with the core the holoenzyme is formed, which can initiate transcription.

It carries out the reaction RNA(n) + a ribonucleoside 5'-triphosphate = RNA(n+1) + diphosphate. Functionally, DNA-dependent RNA polymerase catalyzes the transcription of DNA into RNA using the four ribonucleoside triphosphates as substrates. This is DNA-directed RNA polymerase subunit beta from Brevibacillus brevis (strain 47 / JCM 6285 / NBRC 100599).